Reading from the N-terminus, the 234-residue chain is Glucosamine-6-phosphate deaminase (234 aa).

Asp-62 functions as the Proton acceptor; for enolization step in the catalytic mechanism. Asn-128 functions as the For ring-opening step in the catalytic mechanism. His-130 functions as the Proton acceptor; for ring-opening step in the catalytic mechanism. Glu-135 (for ring-opening step) is an active-site residue.

Belongs to the glucosamine/galactosamine-6-phosphate isomerase family. NagB subfamily.

The catalysed reaction is alpha-D-glucosamine 6-phosphate + H2O = beta-D-fructose 6-phosphate + NH4(+). It participates in amino-sugar metabolism; N-acetylneuraminate degradation; D-fructose 6-phosphate from N-acetylneuraminate: step 5/5. Its function is as follows. Catalyzes the reversible isomerization-deamination of glucosamine 6-phosphate (GlcN6P) to form fructose 6-phosphate (Fru6P) and ammonium ion. The chain is Glucosamine-6-phosphate deaminase from Streptococcus equi subsp. zooepidemicus (strain H70).